The sequence spans 1210 residues: Adenine-specific methyltransferase PglX (1210 aa).

Positions 1181 to 1194 (KQGEHGLTDDDLRG) are enriched in basic and acidic residues. The tract at residues 1181-1210 (KQGEHGLTDDDLRGWRPPAATRRRRAAAKQ) is disordered. Over residues 1201 to 1210 (TRRRRAAAKQ) the composition is skewed to basic residues.

It belongs to the methyltransferase superfamily. PglX adenine methyltransferase family.

It carries out the reaction a 2'-deoxyadenosine in DNA + S-adenosyl-L-methionine = an N(6)-methyl-2'-deoxyadenosine in DNA + S-adenosyl-L-homocysteine + H(+). Functionally, BREX systems (bacteriophage exclusion) provide immunity against bacteriophage. Part of a type 2 BREX system. Probably a DNA methyltransferase, it methylates phage DNA in vitro in an S-adenosyl-L-methionine-dependent manner. Previously called the phage growth limitation (Pgl) system, it confers protection against bacteriophage phiC31. The bacteria allows one cycle of phage infection, but subsequent cycles are impaired, protecting the original bacterial colony. The system undergoes high rates (10(-3) to 10(-4)) of phase reversion, i.e. loss and regain of phiC31 resistance. When the pglW-pglX-pglY-pglZ genes are transformed into a susceptible S.lividans (strain 1326) they confer resistance to infection by phage phiC31 and phiBT1; all 4 genes are necessary. Probably a toxic component of a type II toxin-antitoxin (TA) system. The toxic activity is inhibited by its cognate antitoxin PglZ. In terms of biological role, may be a subtypes G and alpha restriction enzyme that recognizes and cleaves an unknown sequence. Methylates an adenine residue in the same sequence. In Streptomyces coelicolor (strain ATCC BAA-471 / A3(2) / M145), this protein is Adenine-specific methyltransferase PglX.